Here is a 343-residue protein sequence, read N- to C-terminus: MKFLDQAKIYVKSGDGGDGVIAFRREKYIEFGGPDGGNGGRGGDIIVEAVANLNTLIDFRYTQHFRAPKGGNGAGSDRTGAAAPDVLIKVPVGTQILEDDRETLIADLDVPGKRITLCRGGDGGHGNAHFKSSTNRAPRRADKGWPGEERWVWLRLKLIADAGLVGLPNAGKSTFLSVVSAARPKIADYPFTTLHPQLGVVRLSLQEEFVLADIPGLIEGAHEGAGLGDRFLGHVERCAVLIHLIDGAAGDVVKAWRTVREEMEGYGGGLTEKPEIIVLNKCDGMTPREASARRSALAKASGQTVTVISGVTGEGVQPLLRQVMTYVAQSREERRKAMSGTSA.

One can recognise an Obg domain in the interval 1–159; the sequence is MKFLDQAKIY…RWVWLRLKLI (159 aa). Positions 160-328 constitute an OBG-type G domain; sequence ADAGLVGLPN…LLRQVMTYVA (169 aa). Residues 166-173, 191-195, 213-216, 280-283, and 309-311 contribute to the GTP site; these read GLPNAGKS, FTTLH, DIPG, NKCD, and SGV. Residues S173 and T193 each contribute to the Mg(2+) site.

Belongs to the TRAFAC class OBG-HflX-like GTPase superfamily. OBG GTPase family. As to quaternary structure, monomer. Requires Mg(2+) as cofactor.

Its subcellular location is the cytoplasm. Functionally, an essential GTPase which binds GTP, GDP and possibly (p)ppGpp with moderate affinity, with high nucleotide exchange rates and a fairly low GTP hydrolysis rate. Plays a role in control of the cell cycle, stress response, ribosome biogenesis and in those bacteria that undergo differentiation, in morphogenesis control. The chain is GTPase Obg from Granulibacter bethesdensis (strain ATCC BAA-1260 / CGDNIH1).